A 705-amino-acid chain; its full sequence is Elongation factor G (705 aa).

Positions A8–T290 constitute a tr-type G domain. GTP-binding positions include A17–T24, D88–H92, and N142–D145.

The protein belongs to the TRAFAC class translation factor GTPase superfamily. Classic translation factor GTPase family. EF-G/EF-2 subfamily.

Its subcellular location is the cytoplasm. Its function is as follows. Catalyzes the GTP-dependent ribosomal translocation step during translation elongation. During this step, the ribosome changes from the pre-translocational (PRE) to the post-translocational (POST) state as the newly formed A-site-bound peptidyl-tRNA and P-site-bound deacylated tRNA move to the P and E sites, respectively. Catalyzes the coordinated movement of the two tRNA molecules, the mRNA and conformational changes in the ribosome. The sequence is that of Elongation factor G from Baumannia cicadellinicola subsp. Homalodisca coagulata.